We begin with the raw amino-acid sequence, 373 residues long: MLIPLSMKNCFRLLCQHKVPAAGFKSPPTHGLILQSISNDVYENLAFEDWIHDHIHLEGKPILFLWRNSPSVVIGRHQNPWQECNLHLMRQEGIKLARRKSGGGAVYHDMGNINLTFFTTKTKYDRMENLKLIVRALNAVQPQLDVQPTKKFDLLLDGQFKISGTASKIGRTAAYHHCTLLCSTNRTALSSSLKSPYCGIKSNATPSIPSAVKNLLERDSTLTCEVLMSAVAAEYAAHHQVDGHVNLINPADETMFPGINRKVKELQSWEWVYGRTPKFTVDTTFHVPYEQAHLEIQVFMDVKNGRIETCAIKAPDHWLPLEIGEKLNSSFIGSKFCPVETTLLTNVLLRTCPGDHHLHSKWYILCEKIRGIM.

A mitochondrion-targeting transit peptide spans 1 to 25; the sequence is MLIPLSMKNCFRLLCQHKVPAAGFK. The region spanning 57–243 is the BPL/LPL catalytic domain; the sequence is LEGKPILFLW…EYAAHHQVDG (187 aa). Y107, K151, K161, and T179 together coordinate (R)-lipoyl-5'-AMP.

The protein belongs to the LplA family.

The protein resides in the mitochondrion. It carries out the reaction (R)-lipoyl-5'-AMP + L-lysyl-[lipoyl-carrier protein] = N(6)-[(R)-lipoyl]-L-lysyl-[lipoyl-carrier protein] + AMP + 2 H(+). The enzyme catalyses N(6)-[(R)-lipoyl]-L-lysyl-[glycine-cleavage complex H protein] + L-lysyl-[lipoyl-carrier protein] = L-lysyl-[glycine-cleavage complex H protein] + N(6)-[(R)-lipoyl]-L-lysyl-[lipoyl-carrier protein]. Its pathway is protein modification; protein lipoylation via exogenous pathway; protein N(6)-(lipoyl)lysine from lipoate: step 2/2. Its function is as follows. Lipoyl amidotransferase that catalyzes the transfer of lipoyl moieties from lipoyl-protein H of the glycine cleavage system (lipoyl-GCSH) to E2 subunits of the pyruvate dehydrogenase complex (PDCE2). Unable to catalyze the transfer of octanoyl from octanoyl-GCSH to PDCE2. In vitro, it is also able to catalyze the transfer of the lipoyl group from lipoyl-AMP to the specific lysine residue of lipoyl domains of lipoate-dependent enzymes but this reaction may not be physiologically relevant. The chain is Lipoyl amidotransferase LIPT1, mitochondrial from Mus musculus (Mouse).